A 159-amino-acid chain; its full sequence is SsrA-binding protein (159 aa).

Residues Lys-138–Val-159 form a disordered region.

Belongs to the SmpB family.

It localises to the cytoplasm. Required for rescue of stalled ribosomes mediated by trans-translation. Binds to transfer-messenger RNA (tmRNA), required for stable association of tmRNA with ribosomes. tmRNA and SmpB together mimic tRNA shape, replacing the anticodon stem-loop with SmpB. tmRNA is encoded by the ssrA gene; the 2 termini fold to resemble tRNA(Ala) and it encodes a 'tag peptide', a short internal open reading frame. During trans-translation Ala-aminoacylated tmRNA acts like a tRNA, entering the A-site of stalled ribosomes, displacing the stalled mRNA. The ribosome then switches to translate the ORF on the tmRNA; the nascent peptide is terminated with the 'tag peptide' encoded by the tmRNA and targeted for degradation. The ribosome is freed to recommence translation, which seems to be the essential function of trans-translation. The polypeptide is SsrA-binding protein (Alteromonas mediterranea (strain DSM 17117 / CIP 110805 / LMG 28347 / Deep ecotype)).